A 300-amino-acid chain; its full sequence is Succinate--CoA ligase [ADP-forming] subunit alpha (300 aa).

Residues 17-20, Lys-43, and 96-98 each bind CoA; these read TGST and ITE. Residue Tyr-159 participates in substrate binding. The active-site Tele-phosphohistidine intermediate is His-247.

Belongs to the succinate/malate CoA ligase alpha subunit family. As to quaternary structure, heterotetramer of two alpha and two beta subunits.

It catalyses the reaction succinate + ATP + CoA = succinyl-CoA + ADP + phosphate. The enzyme catalyses GTP + succinate + CoA = succinyl-CoA + GDP + phosphate. The protein operates within carbohydrate metabolism; tricarboxylic acid cycle; succinate from succinyl-CoA (ligase route): step 1/1. Succinyl-CoA synthetase functions in the citric acid cycle (TCA), coupling the hydrolysis of succinyl-CoA to the synthesis of either ATP or GTP and thus represents the only step of substrate-level phosphorylation in the TCA. The alpha subunit of the enzyme binds the substrates coenzyme A and phosphate, while succinate binding and nucleotide specificity is provided by the beta subunit. This chain is Succinate--CoA ligase [ADP-forming] subunit alpha, found in Bacillus subtilis (strain 168).